Here is an 86-residue protein sequence, read N- to C-terminus: Mu-theraphotoxin-Hhn1b 1 (86 aa).

The N-terminal stretch at 1 to 21 is a signal peptide; sequence MKASMFLALAGLALLFVVCYA. Positions 22–49 are excised as a propeptide; the sequence is SESEEKEFSNELLSSVLAVDDNSKGEER. Intrachain disulfides connect Cys-51–Cys-66, Cys-58–Cys-73, and Cys-65–Cys-80. Ile-84 is subject to Isoleucine amide.

The protein belongs to the neurotoxin 10 (Hwtx-1) family. 22 (Htx-4) subfamily. In terms of assembly, monomer. As to expression, expressed by the venom gland.

The protein localises to the secreted. Its function is as follows. Neurotoxin that selectively inhibits neuronal tetrodotoxin-sensitive voltage-gated sodium channels (Nav) (IC(50)=44.6 nM). It is active on Nav1.2/SCN2A (IC(50)=22.4 nM), Nav1.6/SCN8A (IC(50)=50.1 nM) and Nav1.7/SCN9A (IC(50)=48.9 nM). It shows low affinity for lipid bilayers. The chain is Mu-theraphotoxin-Hhn1b 1 from Cyriopagopus hainanus (Chinese bird spider).